The following is a 298-amino-acid chain: Acetylglutamate kinase (298 aa).

Residues 69–70 (GG), Arg91, and Asn196 each bind substrate.

This sequence belongs to the acetylglutamate kinase family. ArgB subfamily.

The protein resides in the cytoplasm. It catalyses the reaction N-acetyl-L-glutamate + ATP = N-acetyl-L-glutamyl 5-phosphate + ADP. It participates in amino-acid biosynthesis; L-arginine biosynthesis; N(2)-acetyl-L-ornithine from L-glutamate: step 2/4. In terms of biological role, catalyzes the ATP-dependent phosphorylation of N-acetyl-L-glutamate. The sequence is that of Acetylglutamate kinase from Rhodopseudomonas palustris (strain BisB18).